The chain runs to 293 residues: 4-diphosphocytidyl-2-C-methyl-D-erythritol kinase (293 aa).

Lysine 16 is a catalytic residue. ATP is bound at residue 99-109 (PMGAGLGGGSS). Residue aspartate 141 is part of the active site.

The protein belongs to the GHMP kinase family. IspE subfamily.

The enzyme catalyses 4-CDP-2-C-methyl-D-erythritol + ATP = 4-CDP-2-C-methyl-D-erythritol 2-phosphate + ADP + H(+). It participates in isoprenoid biosynthesis; isopentenyl diphosphate biosynthesis via DXP pathway; isopentenyl diphosphate from 1-deoxy-D-xylulose 5-phosphate: step 3/6. In terms of biological role, catalyzes the phosphorylation of the position 2 hydroxy group of 4-diphosphocytidyl-2C-methyl-D-erythritol. The polypeptide is 4-diphosphocytidyl-2-C-methyl-D-erythritol kinase (Paraburkholderia phytofirmans (strain DSM 17436 / LMG 22146 / PsJN) (Burkholderia phytofirmans)).